Here is a 1328-residue protein sequence, read N- to C-terminus: 5'-3' exoribonuclease 1 (1328 aa).

Residues 1211-1328 (AGKNRKTNVS…VQPMGKLQIN (118 aa)) are disordered. Over residues 1217–1231 (TNVSANNVSQGTDSR) the composition is skewed to polar residues. The span at 1275–1286 (HKSKSKFSKGNH) shows a compositional bias: basic residues.

The protein belongs to the 5'-3' exonuclease family. In terms of assembly, monomer. It depends on Mg(2+) as a cofactor.

It localises to the cytoplasm. The protein localises to the perinuclear region. The protein resides in the P-body. With respect to regulation, strand exchange activity is enhanced by fatty acid synthase (stimulatory factor P190/210). Multifunctional protein that exhibits several independent functions at different levels of the cellular processes. 5'-3' exonuclease component of the nonsense-mediated mRNA decay (NMD) which is a highly conserved mRNA degradation pathway, an RNA surveillance system whose role is to identify and rid cells of mRNA with premature termination codons and thus prevents accumulation of potentially harmful truncated proteins. Involved in the degradation of several hypomodified mature tRNA species and participates in the 5'-processing or the degradation of the snoRNA precursors and rRNA processing. The polypeptide is 5'-3' exoribonuclease 1 (exo2) (Schizosaccharomyces pombe (strain 972 / ATCC 24843) (Fission yeast)).